The chain runs to 547 residues: MAVISLLFLAVMYVVHHPLMVSDRMDLDTLARSRQLEKRMSEEMRQLEIEFEERSRAAEEKQKAENFWRGDTSNDQLVLGKKDMRWPFQASGQDGGPLGWMLGNLWNAGLFCLFLIFELLRQNMQHEPAFESSSEEEEEEIRVVPVSSYTWLSGFPSQEALESFYKHYIQNAIRDLPCTCEFVESFVDDLIEACRVLSRREAHPQLEDCLGIGAAFEKWGTLHETQKFDVLVPIVPPQGTMFILEMRDPTLGRRCGCVKVDSECVCKNEKLLGDVLCLVHHRDHSAMLSKCTSSIKAALCTSSHLDVYKTVQWFRNMVSNAWALVAHKYDFKLTLPPSTTTCKLRLDYRSGRSLSISLVLGVQREDTLVYLVSQAPEREQFTSVDWPESFAACEHLFLKLVGRFAPDNTCHLKCLQIILSLQDHQTLPPGASRPILTSYHFKTALMHLLLRLPLTDWQHRMLSQRLQDLLWFLGRSLQQRSLHHFLIGNTHLPLTIPIPKAFRNAEPVNLFQHLVLNPVAHSQAVEEFHNLLAQVKTLPCSPLAGGL.

The N-terminal stretch at 1–16 is a signal peptide; the sequence is MAVISLLFLAVMYVVH. Residues 17–96 lie on the Extracellular side of the membrane; that stretch reads HPLMVSDRMD…PFQASGQDGG (80 aa). Positions 28–66 form a coiled coil; sequence DTLARSRQLEKRMSEEMRQLEIEFEERSRAAEEKQKAEN. Residues 97 to 117 form a helical membrane-spanning segment; that stretch reads PLGWMLGNLWNAGLFCLFLIF. Topologically, residues 118 to 547 are cytoplasmic; the sequence is ELLRQNMQHE…LPCSPLAGGL (430 aa).

Belongs to the ITPRIP family.

It localises to the cell membrane. Functionally, functions as a ligand of CD3E, inhibiting TCR-CD3 complex signaling to regulate T cell activation. Induces stable CD3E-NCK1 binding, thereby preventing the CD3E-ZAP70 interaction and subsequently inhibiting the activation of the downstream ERK-NFkB signaling cascade and calcium influx. The sequence is that of Inositol 1,4,5-trisphosphate receptor-interacting protein-like 1 (Itpripl1) from Rattus norvegicus (Rat).